Consider the following 432-residue polypeptide: Glutamyl-tRNA reductase (432 aa).

Residues 49 to 52 (TCNR), Ser-109, 114 to 116 (EGQ), and Gln-120 each bind substrate. The Nucleophile role is filled by Cys-50. NADP(+) is bound at residue 198-203 (GAGRMS).

This sequence belongs to the glutamyl-tRNA reductase family. In terms of assembly, homodimer.

It catalyses the reaction (S)-4-amino-5-oxopentanoate + tRNA(Glu) + NADP(+) = L-glutamyl-tRNA(Glu) + NADPH + H(+). Its pathway is porphyrin-containing compound metabolism; protoporphyrin-IX biosynthesis; 5-aminolevulinate from L-glutamyl-tRNA(Glu): step 1/2. It participates in porphyrin-containing compound metabolism; chlorophyll biosynthesis. In terms of biological role, catalyzes the NADPH-dependent reduction of glutamyl-tRNA(Glu) to glutamate 1-semialdehyde (GSA). The polypeptide is Glutamyl-tRNA reductase (Synechococcus sp. (strain CC9605)).